The sequence spans 86 residues: Insulin-related peptide 2 (86 aa).

Residues 1–19 form the signal peptide; that stretch reads MKFYIVFALILACAACVSS. A propeptide spanning residues 20–43 is cleaved from the precursor; the sequence is QEGTNFYCGRQLSRTLALVCWGAE. An Arginine amide modification is found at R63. The propeptide occupies 67-86; sequence GPVDECCLKPCSIEEMLTYC.

The protein belongs to the insulin family. DAGWWVPPQSARALGGGR-amide: Expressed in corpora cardiaca (CC), corpora allata (CA), antennal lobe (AL) and gnathal ganglion (GNG) (at protein level). Expression in CC and CA detected in most animals, in AL in some animals and in GNG in few animals (at protein level).

Its subcellular location is the secreted. This is Insulin-related peptide 2 from Agrotis ipsilon (Black cutworm moth).